The chain runs to 411 residues: MLKGIEEISATKKRLKIEIPADIVEGEIQKALKEIQKKAKIPGFRPGKAPISIIEKKFGKEAEADVLEKLVSESYQKAVKETKIKPLLPPMAEDAIDIKRNEPLSFELVVEVRPDIENLNYDNIEVEEISTEVKEEEIEEVLQRLSKERGTYEPTEEPAMSEDLVVIDYTTDIGKEAKDYIYKLGAGPFPEDFSKAIEGKKKDETFSVTIDFPEDSIADFAGKKVNFEITIKEVKRRQNIPLEELHKELGFEDSDSLKKYIRQSLENAKKEQALEKQKFDILKKLLETYDFELPEGLVEMEMKRITEEYESLGLDITQHMDKISERAKRNVKAYILIDLIGEKEGVSVSEEELKQEIMNIARRYSITPQGVVQYYMSRDGSLEALQNSVFERKVFDILLQKSNRIKKEEAV.

The PPIase FKBP-type domain occupies 162 to 240; the sequence is EDLVVIDYTT…IKEVKRRQNI (79 aa).

Belongs to the FKBP-type PPIase family. Tig subfamily.

It localises to the cytoplasm. The enzyme catalyses [protein]-peptidylproline (omega=180) = [protein]-peptidylproline (omega=0). In terms of biological role, involved in protein export. Acts as a chaperone by maintaining the newly synthesized protein in an open conformation. Functions as a peptidyl-prolyl cis-trans isomerase. The protein is Trigger factor of Thermodesulfovibrio yellowstonii (strain ATCC 51303 / DSM 11347 / YP87).